A 523-amino-acid polypeptide reads, in one-letter code: MKETDQMQSLEGSGAERSVGTQTGSMTGQIPRLSKVNLFTLLSLWMELFPGVEAQGQKSQKTEEESRGPLGDNEELTRVSTEKKQVKKTGLVVVKNMKIIGLHCSSEDLHTGQIALIKHGSRLKNCDLYFSRKPCSACLKMIVNAGVNRISYWPSDPEISLLTEASSSEDAKLDAKAAERLKSNSRAHVCVLLQPLVCYMVQFVEETSYKCDFIQKTAKALPGADTDFYSECKQERIKEYEMLFLVSNEERHKQILMTIGLESLCEDPYFSNLRQNMKDLILLLATVASSVPNLKHFGFYCSSPEQINEIHNQSLPQEVARHCMVQARLLAYRTEDHKTGVGAVIWAEAKSRSCDGTGAMYFIGCGYNAFPVGSEYADFPHMDDKHKDREIRKFRYIIHAEQNALTFRCQDIKPEERSMIFVTKCPCDECVPLIKGAGIKQIYAGDVDVGKKKADISYMKFGELEGVRKFTWQLNPSEAYSLDPNEPERRENGVLRRRSAKDEQRSSKRPRLETRSAGRATLQ.

Positions 1–11 (MKETDQMQSLE) are enriched in polar residues. Disordered regions lie at residues 1–27 (MKET…GSMT) and 55–81 (QGQK…RVST). The CMP/dCMP-type deaminase 1 domain occupies 71–169 (GDNEELTRVS…SLLTEASSSE (99 aa)). Residues His110, Cys135, and Cys138 each coordinate Zn(2+). The Nuclear export signal signature appears at 272–284 (NLRQNMKDLILLL). The 166-residue stretch at 318–483 (EVARHCMVQA…LNPSEAYSLD (166 aa)) folds into the CMP/dCMP-type deaminase 2 domain. His399 provides a ligand contact to Zn(2+). The Proton donor role is filled by Glu401. Zn(2+) is bound by residues Cys427 and Cys430. The interval 478-523 (EAYSLDPNEPERRENGVLRRRSAKDEQRSSKRPRLETRSAGRATLQ) is disordered. The segment covering 486-516 (EPERRENGVLRRRSAKDEQRSSKRPRLETRS) has biased composition (basic and acidic residues). The short motif at 489 to 511 (RRENGVLRRRSAKDEQRSSKRPR) is the Bipartite nuclear localization signal element.

The protein belongs to the cytidine and deoxycytidylate deaminase family. The cofactor is Zn(2+).

It is found in the cytoplasm. The protein localises to the nucleus. The catalysed reaction is 2'-deoxycytidine + H2O + H(+) = 2'-deoxyuridine + NH4(+). The enzyme catalyses cytidine + H2O + H(+) = uridine + NH4(+). Catalyzes the deamination of cytidine and deoxycytidine into uridine and deoxyuridine, respectively. May play an important role in testicular development and spermatogenesis. The chain is Cytidine and dCMP deaminase domain-containing protein 1 (Cdadc1) from Mus musculus (Mouse).